Here is a 543-residue protein sequence, read N- to C-terminus: CTP synthase (543 aa).

The interval 1–265 (MTRFVFITGG…DTEVLRHFGL (265 aa)) is amidoligase domain. Ser13 serves as a coordination point for CTP. Ser13 contributes to the UTP binding site. 14 to 19 (SLGKGI) provides a ligand contact to ATP. Position 54 (Tyr54) interacts with L-glutamine. Asp71 lines the ATP pocket. 2 residues coordinate Mg(2+): Asp71 and Glu139. Residues 146–148 (DIE), 186–191 (KTKPTQ), and Lys222 contribute to the CTP site. UTP-binding positions include 186-191 (KTKPTQ) and Lys222. The Glutamine amidotransferase type-1 domain occupies 291–542 (RIAVVGKYTA…VGAAVKKMRL (252 aa)). Position 354 (Gly354) interacts with L-glutamine. The Nucleophile; for glutamine hydrolysis role is filled by Cys381. Residues 382-385 (FGMQ), Glu405, and Arg470 contribute to the L-glutamine site. Residues His515 and Glu517 contribute to the active site.

This sequence belongs to the CTP synthase family. Homotetramer.

The enzyme catalyses UTP + L-glutamine + ATP + H2O = CTP + L-glutamate + ADP + phosphate + 2 H(+). The catalysed reaction is L-glutamine + H2O = L-glutamate + NH4(+). It catalyses the reaction UTP + NH4(+) + ATP = CTP + ADP + phosphate + 2 H(+). It functions in the pathway pyrimidine metabolism; CTP biosynthesis via de novo pathway; CTP from UDP: step 2/2. Allosterically activated by GTP, when glutamine is the substrate; GTP has no effect on the reaction when ammonia is the substrate. The allosteric effector GTP functions by stabilizing the protein conformation that binds the tetrahedral intermediate(s) formed during glutamine hydrolysis. Inhibited by the product CTP, via allosteric rather than competitive inhibition. Catalyzes the ATP-dependent amination of UTP to CTP with either L-glutamine or ammonia as the source of nitrogen. Regulates intracellular CTP levels through interactions with the four ribonucleotide triphosphates. This chain is CTP synthase, found in Gluconacetobacter diazotrophicus (strain ATCC 49037 / DSM 5601 / CCUG 37298 / CIP 103539 / LMG 7603 / PAl5).